We begin with the raw amino-acid sequence, 66 residues long: Cold shock protein CspD (66 aa).

The CSD domain occupies 4–63; it reads GKVKWFNNEKGFGFIEVEGGDDVFVHFTAIEGDGYKSLEEGQEVSFEIVEGNRGPQASNV.

The protein localises to the cytoplasm. This is Cold shock protein CspD (cspD) from Bacillus subtilis (strain 168).